The sequence spans 339 residues: DNA repair protein RAD51 homolog 1 (339 aa).

The interval 1–23 is disordered; that stretch reads MAMQVQFEASTDTSAEEESFGPE. The HhH domain maps to 48–77; sequence TVESVAHAPKKELLNIKGISEAKADKILAE. An ATP-binding site is contributed by 127–134; it reads GEFRTGKT.

This sequence belongs to the RecA family. RAD51 subfamily. Forms linear homooligomers, giving rise to a RAD51 nucleoprotein filament, which is essential for strand-pairing reactions during DNA recombination. Expressed at high levels in lymphoid and reproductive organs.

The protein localises to the nucleus. Its subcellular location is the cytoplasm. It is found in the chromosome. Plays an important role in homologous strand exchange, a key step in DNA repair through homologous recombination (HR). Binds to single-stranded DNA in an ATP-dependent manner to form nucleoprotein filaments which are essential for the homology search and strand exchange. Catalyzes the recognition of homology and strand exchange between homologous DNA partners to form a joint molecule between a processed DNA break and the repair template. Recruited to resolve stalled replication forks during replication stress. Also involved in interstrand cross-link repair. The sequence is that of DNA repair protein RAD51 homolog 1 (RAD51A) from Gallus gallus (Chicken).